Here is a 178-residue protein sequence, read N- to C-terminus: Large ribosomal subunit protein uL6 (178 aa).

This sequence belongs to the universal ribosomal protein uL6 family. Part of the 50S ribosomal subunit.

In terms of biological role, this protein binds to the 23S rRNA, and is important in its secondary structure. It is located near the subunit interface in the base of the L7/L12 stalk, and near the tRNA binding site of the peptidyltransferase center. In Staphylococcus saprophyticus subsp. saprophyticus (strain ATCC 15305 / DSM 20229 / NCIMB 8711 / NCTC 7292 / S-41), this protein is Large ribosomal subunit protein uL6.